A 749-amino-acid polypeptide reads, in one-letter code: Cytosolic phospholipase A2 (749 aa).

Residues 1-178 (MSFIDPYQHI…MKKLLGPKNS (178 aa)) are phospholipid binding. S2 bears the Phosphoserine mark. The region spanning 6–122 (PYQHIIVEHH…KVGEKKQVPF (117 aa)) is the C2 domain. Residues D40, T41, D43, N65, D93, A94, and N95 each contribute to the Ca(2+) site. The 601-residue stretch at 140–740 (SSPDLRFSMA…SSVEARRFFN (601 aa)) folds into the PLA2c domain. S228 (nucleophile) is an active-site residue. T268 bears the Phosphothreonine mark. Positions 426-458 (AKHIVSNDSSDSDDESQGPKGTEHEEAEREYQN) are disordered. Phosphoserine is present on residues S434, S435, and S437. Basic and acidic residues predominate over residues 446-457 (GTEHEEAEREYQ). Phosphoserine; by MAPK is present on S505. S515 is modified (phosphoserine). Residue K541 forms a Glycyl lysine isopeptide (Lys-Gly) (interchain with G-Cter in SUMO2) linkage. Residue D549 is the Proton acceptor of the active site. Residue K606 forms a Glycyl lysine isopeptide (Lys-Gly) (interchain with G-Cter in SUMO2) linkage. S727 and S729 each carry phosphoserine.

Interacts with KAT5. Phosphorylated at both Ser-505 and Ser-727 in response to mitogenic stimuli. As to expression, detected in granulosa cells after stimulation with chorionic gonadotropin (at protein level).

Its subcellular location is the cytoplasm. It localises to the golgi apparatus membrane. The protein localises to the nucleus envelope. The enzyme catalyses a 1,2-diacyl-sn-glycero-3-phosphocholine + H2O = a 1-acyl-sn-glycero-3-phosphocholine + a fatty acid + H(+). It catalyses the reaction a 1-O-alkyl-2-acyl-sn-glycero-3-phosphocholine + H2O = a 1-O-alkyl-sn-glycero-3-phosphocholine + a fatty acid + H(+). The catalysed reaction is a 1-acyl-sn-glycero-3-phosphocholine + H2O = sn-glycerol 3-phosphocholine + a fatty acid + H(+). It carries out the reaction 1-hexadecanoyl-2-(5Z,8Z,11Z,14Z-eicosatetraenoyl)-sn-glycero-3-phosphocholine + H2O = 1-hexadecanoyl-sn-glycero-3-phosphocholine + (5Z,8Z,11Z,14Z)-eicosatetraenoate + H(+). The enzyme catalyses 1,2-di-(5Z,8Z,11Z,14Z-eicosatetraenoyl)-sn-glycero-3-phosphocholine + H2O = 1-(5Z,8Z,11Z,14Z-eicosatetraenoyl)-sn-glycero-3-phosphocholine + (5Z,8Z,11Z,14Z)-eicosatetraenoate + H(+). It catalyses the reaction 1-octadecanoyl-2-(5Z,8Z,11Z,14Z-eicosatetraenoyl)-sn-glycero-3-phosphocholine + H2O = 1-octadecanoyl-sn-glycero-3-phosphocholine + (5Z,8Z,11Z,14Z)-eicosatetraenoate + H(+). The catalysed reaction is 1-hexadecanoyl-2-(9Z,12Z-octadecadienoyl)-sn-glycero-3-phosphocholine + H2O = (9Z,12Z)-octadecadienoate + 1-hexadecanoyl-sn-glycero-3-phosphocholine + H(+). It carries out the reaction 1-octadecanoyl-2-(9Z,12Z,15Z-octadecatrienoyl)-sn-glycero-3-phosphocholine + H2O = (9Z,12Z,15Z)-octadecatrienoate + 1-octadecanoyl-sn-glycero-3-phosphocholine + H(+). The enzyme catalyses 1-(5Z,8Z,11Z,14Z-eicosatetraenoyl)-2-hexadecanoyl-sn-glycero-3-phosphocholine + H2O = 1-(5Z,8Z,11Z,14Z-eicosatetraenoyl)-sn-glycero-3-phosphocholine + hexadecanoate + H(+). It catalyses the reaction 1-O-hexadecyl-2-(5Z,8Z,11Z,14Z)-eicosatetraenoyl-sn-glycero-3-phosphocholine + H2O = 1-O-hexadecyl-sn-glycero-3-phosphocholine + (5Z,8Z,11Z,14Z)-eicosatetraenoate + H(+). The catalysed reaction is 1,2-di-(9Z-octadecenoyl)-sn-glycero-3-phospho-(1'-sn-glycerol) + H2O = 1-(9Z-octadecenoyl)-sn-glycero-3-phospho-(1'-sn-glycerol) + (9Z)-octadecenoate + H(+). It carries out the reaction 1-octadecanoyl-2-(5Z,8Z,11Z,14Z-eicosatetraenoyl)-sn-glycero-3-phosphate + H2O = 1-octadecanoyl-sn-glycero-3-phosphate + (5Z,8Z,11Z,14Z)-eicosatetraenoate + H(+). The enzyme catalyses 1-hexadecanoyl-sn-glycero-3-phosphocholine + H2O = sn-glycerol 3-phosphocholine + hexadecanoate + H(+). It catalyses the reaction 2-(prostaglandin E2)-sn-glycero-3-phosphoethanolamine + H2O = sn-glycero-3-phosphoethanolamine + prostaglandin E2 + H(+). The catalysed reaction is 2-[(15S)-hydroxy-(5Z,8Z,11Z,13E)-eicosatetraenoyl]-sn-glycero-3-phosphocholine + H2O = (15S)-hydroxy-(5Z,8Z,11Z,13E)-eicosatetraenoate + sn-glycerol 3-phosphocholine + H(+). It carries out the reaction 2-[(15R)-hydroxy-(5Z,8Z,11Z,13E)-eicosatetraenoyl]-sn-glycero-3-phosphocholine + H2O = (15R)-hydroxy-(5Z,8Z,11Z,13E)-eicosatetraenoate + sn-glycerol 3-phosphocholine + H(+). The enzyme catalyses 2-(prostaglandin E2)-sn-glycero-3-phosphocholine + H2O = prostaglandin E2 + sn-glycerol 3-phosphocholine + H(+). It catalyses the reaction 2-[(11R)-hydroxy-(5Z,8Z,12E,14Z)-eicosatetraenoyl]-sn-glycero-3-phosphocholine + H2O = (11R)-hydroxy-(5Z,8Z,12E,14Z)-eicosatetraenoate + sn-glycerol 3-phosphocholine + H(+). The catalysed reaction is 1-(5Z,8Z,11Z,14Z-eicosatetraenoyl)-2-O-hexadecyl-sn-glycero-3-phosphocholine + H2O = 2-O-hexadecyl-sn-glycero-3-phosphocholine + (5Z,8Z,11Z,14Z)-eicosatetraenoate + H(+). It carries out the reaction 1-octadecanoyl-2-(5Z,8Z,11Z,14Z-eicosatetraenoyl)-sn-glycero-3-phosphocholine + glycerol = 1-(5Z,8Z,11Z,14Z-eicosatetraenoyl)-glycerol + 1-octadecanoyl-sn-glycero-3-phosphocholine. The enzyme catalyses 1-octadecanoyl-2-(9Z,12Z,15Z-octadecatrienoyl)-sn-glycero-3-phosphocholine + glycerol = 1-(9Z,12Z,15Z-octadecatrienoyl)-glycerol + 1-octadecanoyl-sn-glycero-3-phosphocholine. It functions in the pathway membrane lipid metabolism; glycerophospholipid metabolism. It participates in lipid metabolism; arachidonate metabolism. The protein operates within lipid metabolism; prostaglandin biosynthesis. Its pathway is lipid metabolism; leukotriene B4 biosynthesis. Its activity is regulated as follows. Activated by cytosolic calcium, which is necessary for binding to membrane lipids. Activated by phosphorylation in response to mitogenic stimuli. In terms of biological role, has primarily calcium-dependent phospholipase and lysophospholipase activities, with a major role in membrane lipid remodeling and biosynthesis of lipid mediators of the inflammatory response. Plays an important role in embryo implantation and parturition through its ability to trigger prostanoid production. Preferentially hydrolyzes the ester bond of the fatty acyl group attached at sn-2 position of phospholipids (phospholipase A2 activity). Selectively hydrolyzes sn-2 arachidonoyl group from membrane phospholipids, providing the precursor for eicosanoid biosynthesis via the cyclooxygenase pathway. In an alternative pathway of eicosanoid biosynthesis, hydrolyzes sn-2 fatty acyl chain of eicosanoid lysophopholipids to release free bioactive eicosanoids. Hydrolyzes the ester bond of the fatty acyl group attached at sn-1 position of phospholipids (phospholipase A1 activity) only if an ether linkage rather than an ester linkage is present at the sn-2 position. This hydrolysis is not stereospecific. Has calcium-independent phospholipase A2 and lysophospholipase activities in the presence of phosphoinositides. Has O-acyltransferase activity. Catalyzes the transfer of fatty acyl chains from phospholipids to a primary hydroxyl group of glycerol (sn-1 or sn-3), potentially contributing to monoacylglycerol synthesis. The polypeptide is Cytosolic phospholipase A2 (PLA2G4A) (Bos taurus (Bovine)).